Here is a 203-residue protein sequence, read N- to C-terminus: Large ribosomal subunit protein bL25 (203 aa).

This sequence belongs to the bacterial ribosomal protein bL25 family. CTC subfamily. In terms of assembly, part of the 50S ribosomal subunit; part of the 5S rRNA/L5/L18/L25 subcomplex. Contacts the 5S rRNA. Binds to the 5S rRNA independently of L5 and L18.

In terms of biological role, this is one of the proteins that binds to the 5S RNA in the ribosome where it forms part of the central protuberance. In Cereibacter sphaeroides (strain ATCC 17025 / ATH 2.4.3) (Rhodobacter sphaeroides), this protein is Large ribosomal subunit protein bL25.